We begin with the raw amino-acid sequence, 347 residues long: GMP reductase (347 aa).

Alanine 108 to alanine 131 is an NADP(+) binding site. Residues glycine 181 and glycine 183 each contribute to the K(+) site. The active-site Thioimidate intermediate is the cysteine 186. Residue isoleucine 216–valine 239 coordinates NADP(+).

It belongs to the IMPDH/GMPR family. GuaC type 1 subfamily. As to quaternary structure, homotetramer.

The catalysed reaction is IMP + NH4(+) + NADP(+) = GMP + NADPH + 2 H(+). Functionally, catalyzes the irreversible NADPH-dependent deamination of GMP to IMP. It functions in the conversion of nucleobase, nucleoside and nucleotide derivatives of G to A nucleotides, and in maintaining the intracellular balance of A and G nucleotides. This is GMP reductase from Serratia proteamaculans (strain 568).